The following is a 142-amino-acid chain: Small ribosomal subunit protein uS12 (142 aa).

This sequence belongs to the universal ribosomal protein uS12 family. As to quaternary structure, part of the 30S ribosomal subunit.

In terms of biological role, with S4 and S5 plays an important role in translational accuracy. Located at the interface of the 30S and 50S subunits. In Methanothrix thermoacetophila (strain DSM 6194 / JCM 14653 / NBRC 101360 / PT) (Methanosaeta thermophila), this protein is Small ribosomal subunit protein uS12.